A 150-amino-acid polypeptide reads, in one-letter code: MASLDSPLLILLVLAVLGIVSHNMTITLAVLFLLVVRFTPLNHFFPWVEKYGLSFGILVLTIGVLAPIASGKIAASEVVQAFLNWKSLLAVIIGIAVSWLGGRGVSLMSNQPSVVAGLLVGTVIGVALLRGVPVGPLIAAGLLSLLIGKG.

The next 4 helical transmembrane spans lie at 8-28 (LLIL…TITL), 51-71 (YGLS…IASG), 81-101 (AFLN…SWLG), and 114-134 (VVAG…GVPV).

Belongs to the UPF0756 family.

Its subcellular location is the cell membrane. The chain is UPF0756 membrane protein Dd703_1075 from Musicola paradisiaca (strain Ech703) (Dickeya paradisiaca).